A 458-amino-acid polypeptide reads, in one-letter code: tRNA modification GTPase MnmE (458 aa).

Arg23, Glu87, and Arg126 together coordinate (6S)-5-formyl-5,6,7,8-tetrahydrofolate. Residues 224–380 (GLSMVIVGKP…LKSKIKDLFF (157 aa)) form the TrmE-type G domain. Asn234 lines the K(+) pocket. GTP-binding positions include 234-239 (NVGKSS), 253-259 (TDIAGTT), and 278-281 (DTAG). Ser238 is a Mg(2+) binding site. K(+)-binding residues include Thr253, Ile255, and Thr258. Residue Thr259 participates in Mg(2+) binding. Lys458 provides a ligand contact to (6S)-5-formyl-5,6,7,8-tetrahydrofolate.

It belongs to the TRAFAC class TrmE-Era-EngA-EngB-Septin-like GTPase superfamily. TrmE GTPase family. As to quaternary structure, homodimer. Heterotetramer of two MnmE and two MnmG subunits. The cofactor is K(+).

Its subcellular location is the cytoplasm. Functionally, exhibits a very high intrinsic GTPase hydrolysis rate. Involved in the addition of a carboxymethylaminomethyl (cmnm) group at the wobble position (U34) of certain tRNAs, forming tRNA-cmnm(5)s(2)U34. The protein is tRNA modification GTPase MnmE of Clostridium perfringens (strain ATCC 13124 / DSM 756 / JCM 1290 / NCIMB 6125 / NCTC 8237 / Type A).